Reading from the N-terminus, the 1845-residue chain is Proteasome activator complex subunit 4 (1845 aa).

Positions 1–13 (MEPAERAGGRDPL) are enriched in basic and acidic residues. The interval 1-26 (MEPAERAGGRDPLEPGGRPGPDPQGF) is disordered. HEAT repeat units follow at residues 475–519 (PEGP…LVDC) and 1000–1039 (NFCC…NHSG). S1123 bears the Phosphoserine mark. HEAT repeat units follow at residues 1181–1219 (RVLP…QLKR) and 1356–1394 (DAFL…GSKH). S1616 is subject to Phosphoserine. HEAT repeat units lie at residues 1638–1676 (PHQV…YNLF) and 1682–1720 (EDAV…CNFL). The interval 1652–1740 (ARSSSWHARY…EQLCKTKLPK (89 aa)) is bromodomain-like (BRDL).

It belongs to the BLM10 family. Homodimer. Component of the spermatoproteasome, a form of the proteasome specifically found in testis. Interacts with the 20S and 26S proteasomes. In terms of processing, phosphorylated.

The protein resides in the cytoplasm. Its subcellular location is the cytosol. It is found in the nucleus. The protein localises to the nucleus speckle. Associated component of the proteasome that specifically recognizes acetylated histones and promotes ATP- and ubiquitin-independent degradation of core histones during spermatogenesis and DNA damage response. Recognizes and binds acetylated histones via its bromodomain-like (BRDL) region and activates the proteasome by opening the gated channel for substrate entry. Binds to the core proteasome via its C-terminus, which occupies the same binding sites as the proteasomal ATPases, opening the closed structure of the proteasome via an active gating mechanism. Component of the spermatoproteasome, a form of the proteasome specifically found in testis: binds to acetylated histones and promotes degradation of histones, thereby participating actively to the exchange of histones during spermatogenesis. Also involved in DNA damage response in somatic cells, by promoting degradation of histones following DNA double-strand breaks. The protein is Proteasome activator complex subunit 4 (PSME4) of Bos taurus (Bovine).